A 587-amino-acid chain; its full sequence is 65-kDa microtubule-associated protein 1 (587 aa).

5 coiled-coil regions span residues 46 to 84 (QECL…TMSL), 151 to 181 (DESD…LRKV), 234 to 257 (LTLK…LIDL), 290 to 317 (ALAR…MKEI), and 461 to 489 (AMLD…VQEQ). Residues 474-494 (EEEKRRLREQKKVQEQPHVEQ) are compositionally biased toward basic and acidic residues. Residues 474 to 587 (EEEKRRLREQ…AADHQVPASP (114 aa)) are disordered. The residue at position 503 (serine 503) is a Phosphoserine. Residue threonine 526 is modified to Phosphothreonine. Polar residues predominate over residues 531-542 (LSLNANQNGSRS). Residues serine 532 and serine 540 each carry the phosphoserine modification. Phosphothreonine is present on residues threonine 543 and threonine 552. Basic and acidic residues predominate over residues 543–553 (TAKEAGRRETL). Residues serine 573, serine 576, and serine 586 each carry the phosphoserine modification.

Belongs to the MAP65/ASE1 family. As to quaternary structure, forms dimer. Binds to MT, mostly with coaligned MT, both between parallel or antiparallel, forming thick bundles. Interacts with the alpha-tubulin subunit of the tubulin heterodimer. Bundles polymerized MT via the formation of 25-nm crossbridges at specific stages of the cell cycle (e.g. bundles microtubules in interphase, anaphase and telophase but does not bind microtubules in prophase or metaphase), at the plus-end, the minus-end, or along the entire length of MT, and along phragmoplast MT. Interacts with SH3P1 and MPK4. Basal phosphorylation at all stages of the cell cycle. MT-binding properties inhibited by hyperphosphorylation mediated by CDKs and/or MAPKs (e.g. ANP2, ANP3, MPK4 and MPK6) during prometaphase and metaphase. In terms of tissue distribution, expressed in all organs and tissues with the exception of sepals and anthers. Bound to subsets of microtubules in the cells of root epidermis, hypocotyl and cotyledons (at protein level).

Its subcellular location is the nucleus. The protein resides in the cytoplasm. It localises to the cytoskeleton. The protein localises to the spindle. It is found in the phragmoplast. Its subcellular location is the cell cortex. Its function is as follows. Microtubule-associated protein that bundle and stabilize adjacent microtubules (MT) of the cell cortex. Enhances MT nucleation. Can also bind to tubulin dimers and promotes their polymerization. Confers MT resistance to the drug propyzamide and cold conditions. Plays a role in the central spindle at anaphase to early cytokinesis but is not essential at the midline of the phragmoplast at later stages. Represses metaphase spindle organization and the transition to anaphase in dephosphorylated active form. Promotes the formation of a planar network of antiparallel microtubules. May be involved in stomatal movement modulation by regulating the dynamic and arrangement of cortical MT. In Arabidopsis thaliana (Mouse-ear cress), this protein is 65-kDa microtubule-associated protein 1 (MAP65-1).